The primary structure comprises 154 residues: D-ribose pyranase 2 (154 aa).

The active-site Proton donor is His20. Substrate contacts are provided by residues Asp28, His98, and 121–123; that span reads WGN.

It belongs to the RbsD / FucU family. RbsD subfamily. Homodecamer.

It is found in the cytoplasm. It catalyses the reaction beta-D-ribopyranose = beta-D-ribofuranose. The protein operates within carbohydrate metabolism; D-ribose degradation; D-ribose 5-phosphate from beta-D-ribopyranose: step 1/2. Its function is as follows. Catalyzes the interconversion of beta-pyran and beta-furan forms of D-ribose. The protein is D-ribose pyranase 2 of Rubrobacter xylanophilus (strain DSM 9941 / JCM 11954 / NBRC 16129 / PRD-1).